A 512-amino-acid chain; its full sequence is Pentatricopeptide repeat-containing protein At1g64583, mitochondrial (512 aa).

The transit peptide at 1–34 directs the protein to the mitochondrion; the sequence is MRRLIVTGIATSTAKGFRRVVNPNLLGGGAAARA. PPR repeat units lie at residues 70–104, 105–139, 140–174, 175–209, 210–244, 245–279, 280–314, 315–349, 350–384, 385–415, 420–454, and 455–489; these read SIVDFTRLLTATANLRRYETVIYFSQKMELYGISH, DLYSFTILIHCFCRCSRLSFALSVLGKMMKLGYEP, SIVTFGSLLHGFCLVNRIGDAFSLVILMVKSGYEP, NVVVYNTLIDGLCKNGELNIALELLNEMEKKGLGA, DVVTYNTLLTGLCYSGRWSDAARMLRDMMKRSINP, DVVTFTALIDVFVKQGNLDEAQELYKEMIQSSVDP, NNVTYNSIINGLCMHGRLYDAKKTFDLMASKGCFP, NVVTYNTLISGFCKFRMVDEGMKLFQRMSCEGFNA, DIFTYNTLIHGYCQVGKLRVALDIFCWMVSRRVTP, DIITHCILLHGLCVNGEIESALVKFDDMRES, GIVAYNIMIHGLCKADKVEKAWELFCRLPVEGVKP, and DARTYTIMILGLCKNGPRREADELIRRMKEEGIIC.

This sequence belongs to the PPR family. P subfamily.

The protein localises to the mitochondrion. The chain is Pentatricopeptide repeat-containing protein At1g64583, mitochondrial from Arabidopsis thaliana (Mouse-ear cress).